The following is a 782-amino-acid chain: Protein VAC14 homolog (782 aa).

Met1 is subject to N-acetylmethionine. HEAT repeat units lie at residues 5-42 (KDFAPLTPNIVRALNDKLYEKRKVAALEIEKLVREFVA), 89-126 (LYLKELIEPVLTCFNDADSRLRYYACEALYNIVKVARG), 171-208 (FDLVSFIPLLRERIYSNNQYARQFIISWILVLESVPDI), and 212-249 (DYLPEILDGLFQILGDNGKEIRKMCEVVLGEFLKEIKK). Phosphothreonine is present on Thr11. 2 disordered regions span residues 335–372 (EDDELDELRPGQRQAEPTPDDALPKQEGTASGGPDGSC) and 471–517 (SSPA…LECS). The stretch at 438-475 (RHTDSLFPILLQTLSDESDEVILKDLEVLAEIASSPAG) is one HEAT 5 repeat. Low complexity predominate over residues 478–488 (DDPGPLDGPDL). Thr499 carries the post-translational modification Phosphothreonine. The segment covering 506–517 (LNTSGTKGLECS) has biased composition (polar residues). Ser517 carries the post-translational modification Phosphoserine. One copy of the HEAT 6 repeat lies at 560–598 (LNAENIFHSMADILLREEDLKFASTMVHALNTILLTSTE). Phosphoserine is present on Ser743. The mediates interaction with the PDZ domain of NOS1 stretch occupies residues 773-777 (GDHLD).

It belongs to the VAC14 family. In terms of assembly, forms pentamers. Component of the PI(3,5)P2 regulatory complex/PAS complex, at least composed of PIKFYVE, FIG4 and VAC14. VAC14 nucleates the assembly of the complex and serves as a scaffold by pentamerizing into a star-shaped structure, which can bind a single copy each of PIKFYVE and FIG4 and coordinates their activities. Interacts with NOS1. (Microbial infection) Interacts with HTLV-1 Tax. In terms of tissue distribution, ubiquitously expressed.

It localises to the endosome membrane. The protein localises to the microsome membrane. Scaffold protein component of the PI(3,5)P2 regulatory complex which regulates both the synthesis and turnover of phosphatidylinositol 3,5-bisphosphate (PtdIns(3,5)P2). Pentamerizes into a star-shaped structure and nucleates the assembly of the complex. The pentamer binds a single copy each of PIKFYVE and FIG4 and coordinates both PIKfyve kinase activity and FIG4 phosphatase activity, being required to maintain normal levels of phosphatidylinositol 3-phosphate (PtdIns(3)P) and phosphatidylinositol 5-phosphate (PtdIns(5)P). Plays a role in the biogenesis of endosome carrier vesicles (ECV) / multivesicular bodies (MVB) transport intermediates from early endosomes. This Homo sapiens (Human) protein is Protein VAC14 homolog (VAC14).